Consider the following 431-residue polypeptide: Inactive polypeptide N-acetylgalactosaminyltransferase-like protein 5 (431 aa).

Residues 1–4 (MKSV) are Cytoplasmic-facing. A helical; Signal-anchor for type II membrane protein membrane pass occupies residues 5–27 (IIQGLFCGFLAIGLWASMLLLFL). Residues 28–431 (HLEQEDMLEN…TERKRKKNRF (404 aa)) lie on the Lumenal side of the membrane. The N-linked (GlcNAc...) asparagine glycan is linked to N68. Disulfide bonds link C105–C336 and C327–C403. Residues 114–224 (LPTASIIICF…RVWLEPLLHA (111 aa)) are catalytic subdomain A. Residues 282–344 (PIRSPAMTGG…PCSRVGYNSK (63 aa)) form a catalytic subdomain B region. N353 and N390 each carry an N-linked (GlcNAc...) asparagine glycan.

This sequence belongs to the glycosyltransferase 2 family. GalNAc-T subfamily. The cofactor is Mn(2+). In terms of tissue distribution, expressed in testis. Mainly expressed in the round and elongated spermatids during spermiogenesis, not in the outermost cells of the seminiferous tubules, which contain spermatogonia and somatic Sertoli cells. Present in the juxtanuclear space in the round spermatids, not in the acrosomal vesicles. In the elongating spermatids, localizes strongly in the acroplaxome, the region between the developing acrosome and nucleus. During differentiation, also weakly detected in the transient manchette containing microtubules. In epididymal spermatozoa, weakly detected in the midpiece, but concentrates mainly in the neck region around the head-tail coupling apparatus (at protein level).

The protein localises to the late endosome membrane. Functionally, probable inactive glycosyltransferase required during spermatid development. May participate in protein loading into the acrosomes and accumulation of ubiquitin-proteasome systems around the head-tail coupling apparatus region. This chain is Inactive polypeptide N-acetylgalactosaminyltransferase-like protein 5 (Galntl5), found in Mus musculus (Mouse).